The sequence spans 165 residues: Neurotrophin-3 (165 aa).

Residues 1 to 3 form the signal peptide; the sequence is IQS. The propeptide occupies 4 to 119; that stretch reads TSMDQGSLSE…VLTXTSXXXR (116 aa).

It belongs to the NGF-beta family.

Its subcellular location is the secreted. Its function is as follows. Seems to promote the survival of visceral and proprioceptive sensory neurons. In Tropidophis haetianus (Haitian dwarf boa), this protein is Neurotrophin-3 (NTF3).